Consider the following 445-residue polypeptide: Phosphoglucosamine mutase (445 aa).

The Phosphoserine intermediate role is filled by Ser102. Residues Ser102, Asp241, Asp243, and Asp245 each contribute to the Mg(2+) site. Position 102 is a phosphoserine (Ser102).

Belongs to the phosphohexose mutase family. The cofactor is Mg(2+). In terms of processing, activated by phosphorylation.

It carries out the reaction alpha-D-glucosamine 1-phosphate = D-glucosamine 6-phosphate. Functionally, catalyzes the conversion of glucosamine-6-phosphate to glucosamine-1-phosphate. This Haemophilus influenzae (strain 86-028NP) protein is Phosphoglucosamine mutase.